A 77-amino-acid chain; its full sequence is Large ribosomal subunit protein bL28 (77 aa).

Positions 1–25 (MARVCQVTGKAPMSGNNVSHANNKT) are disordered.

This sequence belongs to the bacterial ribosomal protein bL28 family.

The polypeptide is Large ribosomal subunit protein bL28 (Paraburkholderia phymatum (strain DSM 17167 / CIP 108236 / LMG 21445 / STM815) (Burkholderia phymatum)).